Reading from the N-terminus, the 544-residue chain is ATP-dependent RNA helicase DBP9 (544 aa).

The Q motif signature appears at Lys9–Asn37. Positions Pro41–Ser214 constitute a Helicase ATP-binding domain. Ala54–Thr61 lines the ATP pocket. Positions Asp162–Asp165 match the DEAD box motif. A Helicase C-terminal domain is found at Lys225–Glu430. Residues His525 to Lys544 are disordered. Positions Gly534 to Lys544 are enriched in basic and acidic residues.

The protein belongs to the DEAD box helicase family. DDX56/DBP9 subfamily.

The protein resides in the nucleus. The protein localises to the nucleolus. It catalyses the reaction ATP + H2O = ADP + phosphate + H(+). In terms of biological role, ATP-binding RNA helicase involved in the biogenesis of 60S ribosomal subunits and is required for the normal formation of 25S and 5.8S rRNAs. The sequence is that of ATP-dependent RNA helicase DBP9 (DBP9) from Yarrowia lipolytica (strain CLIB 122 / E 150) (Yeast).